Here is a 66-residue protein sequence, read N- to C-terminus: Ribosome biogenesis protein Nop10 (66 aa).

This sequence belongs to the NOP10 family.

Its function is as follows. Involved in ribosome biogenesis; more specifically in 18S rRNA pseudouridylation and in cleavage of pre-rRNA. This chain is Ribosome biogenesis protein Nop10, found in Desulfurococcus amylolyticus (strain DSM 18924 / JCM 16383 / VKM B-2413 / 1221n) (Desulfurococcus kamchatkensis).